The chain runs to 432 residues: MSKIVKVIGREIIDSRGNPTVEAEVHLEGGFVGMAAAPSGASTGSREALELRDGDKSRFLGKGVTKAVAAVNGPIAQAILGKDAKDQAGIDKIMIDLDGTENKSNFGANAILAVSLANAKAAAASKGLPLYAHIAELNGTPGKYSMPVPMMNIINGGEHADNNVDIQEFMIQPVGAPTLKEAVRMGSEVFHHLAKVLKSKGMNTAVGDEGGYAPNLGSNAEALAVIAEAVKAAGYELGKDITLAMDCAASEFYKDGKYVLAGEGNKAFTSEEFTHFLEDLTKQYPIVSIEDGLDESDWDGFAYQTKVLGDKIQLVGDDLFVTNTKILKEGIEKGIANSILIKFNQIGSLTETLAAIKMAKDAGYTAVISHRSGETEDATIADLAVGTAAGQIKTGSMSRSDRVAKYNQLIRIEEALGEQAPFNGRKEIKGQA.

Glutamine 167 contacts (2R)-2-phosphoglycerate. Glutamate 209 acts as the Proton donor in catalysis. Positions 246, 290, and 317 each coordinate Mg(2+). (2R)-2-phosphoglycerate contacts are provided by lysine 342, arginine 371, serine 372, and lysine 393. Lysine 342 functions as the Proton acceptor in the catalytic mechanism.

The protein belongs to the enolase family. Component of the RNA degradosome, a multiprotein complex involved in RNA processing and mRNA degradation. It depends on Mg(2+) as a cofactor.

It is found in the cytoplasm. It localises to the secreted. Its subcellular location is the cell surface. It carries out the reaction (2R)-2-phosphoglycerate = phosphoenolpyruvate + H2O. The protein operates within carbohydrate degradation; glycolysis; pyruvate from D-glyceraldehyde 3-phosphate: step 4/5. Functionally, catalyzes the reversible conversion of 2-phosphoglycerate (2-PG) into phosphoenolpyruvate (PEP). It is essential for the degradation of carbohydrates via glycolysis. The sequence is that of Enolase from Klebsiella pneumoniae (strain 342).